The sequence spans 263 residues: Type III pantothenate kinase (263 aa).

ATP is bound at residue 14–21 (DIGNTSVN). 115-118 (GADR) provides a ligand contact to substrate. Asp-117 functions as the Proton acceptor in the catalytic mechanism. Residue Asp-137 coordinates K(+). Thr-140 is an ATP binding site. Thr-192 is a substrate binding site.

It belongs to the type III pantothenate kinase family. In terms of assembly, homodimer. Requires NH4(+) as cofactor. K(+) is required as a cofactor.

Its subcellular location is the cytoplasm. The enzyme catalyses (R)-pantothenate + ATP = (R)-4'-phosphopantothenate + ADP + H(+). It participates in cofactor biosynthesis; coenzyme A biosynthesis; CoA from (R)-pantothenate: step 1/5. Catalyzes the phosphorylation of pantothenate (Pan), the first step in CoA biosynthesis. The sequence is that of Type III pantothenate kinase from Dehalococcoides mccartyi (strain ATCC BAA-2100 / JCM 16839 / KCTC 5957 / BAV1).